The chain runs to 768 residues: P-selectin (768 aa).

The first 41 residues, 1 to 41 (MAGCPKGSWTPRLRSVILGGAQLIWFSALISELVNQKEVAA), serve as a signal peptide directing secretion. Over 42 to 709 (WTYNYSTKAY…QAGTLTIQEA (668 aa)) the chain is Extracellular. Positions 58-158 (VFCRRHFTDL…PCFKRKRALC (101 aa)) constitute a C-type lectin domain. Cystine bridges form between cysteine 60/cysteine 158, cysteine 131/cysteine 150, cysteine 163/cysteine 174, cysteine 168/cysteine 183, cysteine 185/cysteine 194, cysteine 200/cysteine 244, cysteine 230/cysteine 257, cysteine 262/cysteine 306, cysteine 292/cysteine 319, cysteine 324/cysteine 368, cysteine 354/cysteine 381, cysteine 386/cysteine 430, cysteine 416/cysteine 443, cysteine 448/cysteine 492, cysteine 478/cysteine 505, cysteine 510/cysteine 554, cysteine 540/cysteine 567, cysteine 580/cysteine 624, cysteine 610/cysteine 637, cysteine 642/cysteine 686, and cysteine 672/cysteine 699. Residues glutamate 121, asparagine 123, and asparagine 124 each coordinate Ca(2+). A carbohydrate is bound at residue asparagine 123. Residues glutamate 133 and asparagine 146 each coordinate a carbohydrate. The Ca(2+) site is built by asparagine 146 and aspartate 147. The EGF-like domain maps to 159–195 (YTASCQDMSCSNQGECIETIGSYTCSCYPGFYGPECE). Sushi domains lie at 198-259 (KECG…KCDA), 260-321 (VQCQ…TCEA), 322-383 (IACE…FCEA), 384-445 (LQCP…ECQA), 446-507 (VSCA…TCEA), 508-569 (IKCP…TCKG), 578-639 (VRCP…MCRA), and 640-701 (VKCS…TCQA). An N-linked (GlcNAc...) asparagine glycan is attached at asparagine 398. The N-linked (GlcNAc...) asparagine glycan is linked to asparagine 603. Residues asparagine 654, asparagine 661, and asparagine 679 are each glycosylated (N-linked (GlcNAc...) asparagine). The chain crosses the membrane as a helical span at residues 710-733 (LTYLGGAVASTTGLAVGGTLLALL). Residues 734-768 (RKRLRKKDDGKCPLNPHSHLGTYGVFTNAAYDPTP) lie on the Cytoplasmic side of the membrane. Cysteine 745 carries the S-palmitoyl cysteine; alternate lipid modification. A lipid anchor (S-stearoyl cysteine; alternate) is attached at cysteine 745. An Endocytosis signal motif is present at residues 756–759 (YGVF). The interval 759–768 (FTNAAYDPTP) is interaction with SNX17.

This sequence belongs to the selectin/LECAM family. In terms of assembly, interacts with SNX17. Interacts with SELPLG/PSGL1 and PODXL2 and mediates neutrophil adhesion and leukocyte rolling. This interaction requires the sialyl-Lewis X epitope of SELPLG and PODXL2, and specific tyrosine sulfation on SELPLG. Interacts (via C-type lectin domain) with alpha-IIb/beta3 integrin ITGA2B:ITGB3 and alpha-V/beta-3 integrin ITGAV:ITGB3. Interacts with alpha5/beta1 integrin ITGA5:ITGB1 and alpha4/beta1 integrin ITGA4:ITGB. In terms of tissue distribution, stored in the alpha-granules of platelets and Weibel-Palade bodies of endothelial cells. Upon cell activation by agonists, P-selectin is transported rapidly to the cell surface.

The protein resides in the cell membrane. Functionally, ca(2+)-dependent receptor for myeloid cells that binds to carbohydrates on neutrophils and monocytes. Mediates the interaction of activated endothelial cells or platelets with leukocytes. The ligand recognized is sialyl-Lewis X. Mediates rapid rolling of leukocyte rolling over vascular surfaces during the initial steps in inflammation through interaction with SELPLG. Mediates cell-cell interactions and cell adhesion via the interaction with integrin alpha-IIb/beta3 (ITGA2B:ITGB3) and integrin alpha-V/beta-3 (ITGAV:ITGB3). The sequence is that of P-selectin (Selp) from Mus musculus (Mouse).